The sequence spans 341 residues: Adenine deaminase (341 aa).

Residues histidine 24, histidine 26, and histidine 204 each coordinate Zn(2+). The Proton donor role is filled by glutamate 207. Zn(2+) is bound at residue aspartate 285. Aspartate 286 is a substrate binding site.

The protein belongs to the metallo-dependent hydrolases superfamily. Adenosine and AMP deaminases family. Adenine deaminase type 2 subfamily. The cofactor is Zn(2+).

It carries out the reaction adenine + H2O + H(+) = hypoxanthine + NH4(+). Functionally, catalyzes the hydrolytic deamination of adenine to hypoxanthine. Plays an important role in the purine salvage pathway and in nitrogen catabolism. In Sphingopyxis alaskensis (strain DSM 13593 / LMG 18877 / RB2256) (Sphingomonas alaskensis), this protein is Adenine deaminase.